Reading from the N-terminus, the 159-residue chain is Ribosomal RNA large subunit methyltransferase H (159 aa).

S-adenosyl-L-methionine contacts are provided by residues Leu-76, Gly-108, and 127–132 (FSKMTF).

This sequence belongs to the RNA methyltransferase RlmH family. As to quaternary structure, homodimer.

The protein localises to the cytoplasm. The enzyme catalyses pseudouridine(1915) in 23S rRNA + S-adenosyl-L-methionine = N(3)-methylpseudouridine(1915) in 23S rRNA + S-adenosyl-L-homocysteine + H(+). Functionally, specifically methylates the pseudouridine at position 1915 (m3Psi1915) in 23S rRNA. This chain is Ribosomal RNA large subunit methyltransferase H, found in Bifidobacterium longum subsp. infantis (strain ATCC 15697 / DSM 20088 / JCM 1222 / NCTC 11817 / S12).